The sequence spans 61 residues: Small ribosomal subunit protein uS14 (61 aa).

Zn(2+) contacts are provided by Cys-24, Cys-27, Cys-40, and Cys-43.

The protein belongs to the universal ribosomal protein uS14 family. Zinc-binding uS14 subfamily. In terms of assembly, part of the 30S ribosomal subunit. Contacts proteins S3 and S10. Zn(2+) serves as cofactor.

Its function is as follows. Binds 16S rRNA, required for the assembly of 30S particles and may also be responsible for determining the conformation of the 16S rRNA at the A site. The sequence is that of Small ribosomal subunit protein uS14 from Malacoplasma penetrans (strain HF-2) (Mycoplasma penetrans).